Reading from the N-terminus, the 179-residue chain is Large ribosomal subunit protein uL5 (179 aa).

Belongs to the universal ribosomal protein uL5 family. As to quaternary structure, part of the 50S ribosomal subunit; part of the 5S rRNA/L5/L18/L25 subcomplex. Contacts the 5S rRNA and the P site tRNA. Forms a bridge to the 30S subunit in the 70S ribosome.

Its function is as follows. This is one of the proteins that bind and probably mediate the attachment of the 5S RNA into the large ribosomal subunit, where it forms part of the central protuberance. In the 70S ribosome it contacts protein S13 of the 30S subunit (bridge B1b), connecting the 2 subunits; this bridge is implicated in subunit movement. Contacts the P site tRNA; the 5S rRNA and some of its associated proteins might help stabilize positioning of ribosome-bound tRNAs. The sequence is that of Large ribosomal subunit protein uL5 from Bacillus cereus (strain 03BB102).